Consider the following 342-residue polypeptide: Ferredoxin--NADP reductase (342 aa).

8 residues coordinate FAD: Cys-17, Asp-36, Gln-44, Tyr-49, Ile-89, Phe-124, Asp-289, and Thr-330.

This sequence belongs to the ferredoxin--NADP reductase type 2 family. In terms of assembly, homodimer. FAD is required as a cofactor.

The catalysed reaction is 2 reduced [2Fe-2S]-[ferredoxin] + NADP(+) + H(+) = 2 oxidized [2Fe-2S]-[ferredoxin] + NADPH. The chain is Ferredoxin--NADP reductase from Rhodopseudomonas palustris (strain HaA2).